The chain runs to 1150 residues: Apomucin (1150 aa).

Low complexity-rich tracts occupy residues 1–36 and 46–79; these read ETARPSVAGSGTTGTVSGASGSTGSSSGSTGATGAS and SVAGSSGAPAVSSGASQAAGTSGAGPGTTASSVG. A run of 5 repeats spans residues 1-44, 45-125, 126-206, 207-287, and 288-368. Residues 1–368 are 6 X 81 AA tandem repeats; it reads ETARPSVAGS…ASIGQPETSR (368 aa). Disordered stretches follow at residues 1–730 and 776–925; these read ETAR…KTGI and APGS…PAPL. Residues S46, S50, S51, S57, S58, and S61 are each glycosylated (O-linked (GalNAc...) serine; partial). O-linked (GalNAc...) threonine; partial glycosylation is present at T66. Residue S67 is glycosylated (O-linked (GalNAc...) serine; partial). T73 and T74 each carry an O-linked (GalNAc...) threonine; partial glycan. S76 and S77 each carry an O-linked (GalNAc...) serine; partial glycan. Residues T81 and T83 are each glycosylated (O-linked (GalNAc...) threonine; partial). Low complexity predominate over residues 86–117; that stretch reads PSVAGSGTTGTVSGASGSTGSSSGSPGATGAS. 2 O-linked (GalNAc...) serine; partial glycosylation sites follow: S87 and S91. O-linked (GalNAc...) threonine; partial glycosylation is found at T93, T94, and T96. 3 O-linked (GalNAc...) serine; partial glycosylation sites follow: S98, S101, and S103. T104 carries an O-linked (GalNAc...) threonine; partial glycan. Residues S106, S107, S108, and S110 are each glycosylated (O-linked (GalNAc...) serine; partial). T114 carries an O-linked (GalNAc...) threonine; partial glycan. O-linked (GalNAc...) serine; partial glycosylation is present at S117. The O-linked (GalNAc...) threonine; partial glycan is linked to T123. Residue S124 is glycosylated (O-linked (GalNAc...) serine; partial). Composition is skewed to low complexity over residues 127 to 160, 167 to 198, 208 to 241, 248 to 279, 289 to 322, 329 to 360, and 370 to 396; these read SVAGSSGAPAVSSGASQAAGTSGAGPGTTASSVG, PSVAGSGTTGTVSGASGSTGSSSGSPGATGAS, and SVAGSSGAPAVSSGASQAAGTSEATTS. The 6; truncated repeat unit spans residues 369-391; sequence ISVAGSSGAPAVSSGASQAAGTS. The N-linked (GlcNAc...) asparagine glycan is linked to N418. Over residues 442–459 the composition is skewed to polar residues; sequence SYNTEATTSIGRSGTTHT. The span at 473–506 shows a compositional bias: low complexity; sequence SHSSQSSKPGSSVTTPGSPESGSETGTSGEFSTT. Composition is skewed to polar residues over residues 507–517 and 537–547; these read VISGSSHTEAT and ELSGTTIASGN. N547 carries N-linked (GlcNAc...) asparagine glycosylation. The span at 548–558 shows a compositional bias: low complexity; the sequence is ATTEATTSTET. Polar residues predominate over residues 564–586; the sequence is TGAQTTVPGSQVSGSETGTSEAV. The segment covering 590-625 has biased composition (low complexity); it reads AIASGSSSTGTTSGASDSQVTGSRTGTTGVVLGTTV. Composition is skewed to polar residues over residues 626–635 and 643–661; these read APGSSSTGAT and GTRSTSLGTTRVASGTTYE. Over residues 671–682 the composition is skewed to gly residues; sequence GGSGTPGSGINT. Composition is skewed to polar residues over residues 688–697, 706–729, and 779–788; these read QVTGIQTGTT, LPGSSNTGATTSPSERTSPGSKTG, and SFNTKATTPT. Residues 790-833 show a composition bias toward low complexity; sequence VRAATGAGTAVGATSRSTGISTGPENSTPGTTETGSGTTSSPGG. The span at 875 to 908 shows a compositional bias: polar residues; that stretch reads ETTTAPRISATGSTSVSKEITASPKVSSPETTAG. 4 N-linked (GlcNAc...) asparagine glycosylation sites follow: N917, N985, N1002, and N1068. Residues 929–995 enclose the VWFC domain; that stretch reads PVCHGPLGEE…DTCCEIGHCE (67 aa). 4 disulfides stabilise this stretch: C1062-C1109, C1076-C1123, C1085-C1139, and C1089-C1141. The 85-residue stretch at 1062–1146 folds into the CTCK domain; that stretch reads CKPSPVNVTV…TACSCLDPCQ (85 aa).

As to quaternary structure, intermolecular disulfide bonds could help maintain a multimeric mucin structure. Extensively O-glycosylated on most but not all Ser and Thr residues of the repeat units. Highest glycosylation appears to occur on Ser residues which have Gly at positions at +2 or -2 from the glycosylation site or, where Gly is the penultimate residue. The presence of proline (usually at position +3 or -3) appears to also enhance glycosylation. As to expression, submaxillary mucosae.

The protein resides in the secreted. Functionally, apomucin is part of mucin, the major glycoprotein synthesized and secreted by mucous cells of the submaxillary gland. Its highly viscous aqueous solutions serve to lubricate the oral cavity and to protect it from the external environment. This chain is Apomucin, found in Sus scrofa (Pig).